The chain runs to 518 residues: 2-isopropylmalate synthase (518 aa).

Residues 24-275 (VYIFDTTLRD…KTNIKTQKLY (252 aa)) enclose the Pyruvate carboxyltransferase domain. The a divalent metal cation site is built by D33, H213, H215, and N249.

The protein belongs to the alpha-IPM synthase/homocitrate synthase family. In terms of assembly, homodimer. A divalent metal cation is required as a cofactor.

The catalysed reaction is 3-methyl-2-oxobutanoate + acetyl-CoA + H2O = (2S)-2-isopropylmalate + CoA + H(+). It functions in the pathway amino-acid biosynthesis; L-leucine biosynthesis; L-leucine from 3-methyl-2-oxobutanoate: step 1/4. Functionally, catalyzes the condensation of the acetyl group of acetyl-CoA with 3-methyl-2-oxobutanoate (2-oxoisovalerate) to form 3-carboxy-3-hydroxy-4-methylpentanoate (2-isopropylmalate). The chain is 2-isopropylmalate synthase (leuA) from Methanocaldococcus jannaschii (strain ATCC 43067 / DSM 2661 / JAL-1 / JCM 10045 / NBRC 100440) (Methanococcus jannaschii).